Reading from the N-terminus, the 73-residue chain is Large ribosomal subunit protein bL31 (73 aa).

The Zn(2+) site is built by Cys-16, Cys-18, Cys-37, and Cys-40.

It belongs to the bacterial ribosomal protein bL31 family. Type A subfamily. Part of the 50S ribosomal subunit. Requires Zn(2+) as cofactor.

Binds the 23S rRNA. This is Large ribosomal subunit protein bL31 from Marinobacter nauticus (strain ATCC 700491 / DSM 11845 / VT8) (Marinobacter aquaeolei).